Here is a 188-residue protein sequence, read N- to C-terminus: Protein-export protein SecB (188 aa).

Disordered stretches follow at residues 1–21 and 160–188; these read MADE…EQPK and RQKA…DTQQ. Residues 176–188 are compositionally biased toward polar residues; it reads SDSTAAQGSDTQQ.

This sequence belongs to the SecB family. Homotetramer, a dimer of dimers. One homotetramer interacts with 1 SecA dimer.

The protein localises to the cytoplasm. One of the proteins required for the normal export of preproteins out of the cell cytoplasm. It is a molecular chaperone that binds to a subset of precursor proteins, maintaining them in a translocation-competent state. It also specifically binds to its receptor SecA. This is Protein-export protein SecB from Alkalilimnicola ehrlichii (strain ATCC BAA-1101 / DSM 17681 / MLHE-1).